Reading from the N-terminus, the 118-residue chain is Protein TusC (118 aa).

The protein belongs to the DsrF/TusC family. Heterohexamer, formed by a dimer of trimers. The hexameric TusBCD complex contains 2 copies each of TusB, TusC and TusD. The TusBCD complex interacts with TusE.

It localises to the cytoplasm. Part of a sulfur-relay system required for 2-thiolation of 5-methylaminomethyl-2-thiouridine (mnm(5)s(2)U) at tRNA wobble positions. This Salmonella typhi protein is Protein TusC.